We begin with the raw amino-acid sequence, 506 residues long: Cationic amino acid transporter 8 (506 aa).

N-linked (GlcNAc...) asparagine glycosylation is found at Asn2 and Asn5. A helical membrane pass occupies residues 38-58; the sequence is FYLLLIIIIYTATSACIYFDW. N-linked (GlcNAc...) asparagine glycosylation is present at Asn75. The next 5 helical transmembrane spans lie at 93 to 113, 116 to 136, 147 to 167, 174 to 194, and 211 to 231; these read NLYP…GFLY, IGPK…WIFL, LIGF…ILTV, ISTF…AVPA, and ICYG…TFLL. Residue Asn277 is glycosylated (N-linked (GlcNAc...) asparagine). A helical transmembrane segment spans residues 302 to 322; it reads ILLFFKVLLSYPSICIIVYFI. N-linked (GlcNAc...) asparagine glycans are attached at residues Asn325 and Asn342. The next 4 membrane-spanning stretches (helical) occupy residues 344–364, 372–392, 399–419, and 427–447; these read SIIN…IIFG, AAII…TALI, LISA…IYCF, and VVFG…SLFC. 2 N-linked (GlcNAc...) asparagine glycosylation sites follow: Asn453 and Asn456. The chain crosses the membrane as a helical span at residues 466-486; that stretch reads TISILLAISFIIMFLPLSILY.

The protein belongs to the SLC43A transporter (TC 2.A.1.44) family.

The protein localises to the cell membrane. Cationic amino acid transporter which transports L-arginine, L-lysine and, to a lesser extent, L-histidine and ornithine. Plays an essential role in gametogenesis. This Plasmodium berghei (strain Anka) protein is Cationic amino acid transporter 8.